The primary structure comprises 295 residues: Probable lipid kinase YegS-like (295 aa).

The 129-residue stretch at 1–129 (MQGRKAMLVL…IDLGQAGDQL (129 aa)) folds into the DAGKc domain. ATP contacts are provided by residues Thr-39, 65–71 (GDGTLRD), and Thr-92. The Mg(2+) site is built by Met-210, Asp-213, and Leu-215. Residue Glu-264 is the Proton acceptor of the active site.

This sequence belongs to the diacylglycerol/lipid kinase family. YegS lipid kinase subfamily. Requires Mg(2+) as cofactor. Ca(2+) serves as cofactor.

The protein resides in the cytoplasm. Its function is as follows. Probably phosphorylates lipids; the in vivo substrate is unknown. The chain is Probable lipid kinase YegS-like from Pseudomonas putida (strain ATCC 47054 / DSM 6125 / CFBP 8728 / NCIMB 11950 / KT2440).